The chain runs to 305 residues: MAGPAFRAAAVRVRVPATSANLGPGFDALGLSLGLYDDVVVRVADSGLHIDIAGEGSETLPRDERHLLARSLRTAFDLLGGQPRGLEIVCANRIPHGRGLGSSSAAICAGIVAARAVTIGGDGKLDDTALLELATEIEGHPDNVAACLLGGFTLSWMEGGAARAIRMEPADSIVPVVFVPGKAVLTETARGLLPRSVPHVDAAANAGRAALLVEALTRRPELLLPATEDRLHQEYRAPAMPESMALVERLRADGIPAVISGAGPTVLALADEASADKVARLAGEGWAANRLSLDARGASVLPLAA.

An ATP-binding site is contributed by 95-105 (PHGRGLGSSSA).

The protein belongs to the GHMP kinase family. Homoserine kinase subfamily.

It is found in the cytoplasm. It catalyses the reaction L-homoserine + ATP = O-phospho-L-homoserine + ADP + H(+). It participates in amino-acid biosynthesis; L-threonine biosynthesis; L-threonine from L-aspartate: step 4/5. In terms of biological role, catalyzes the ATP-dependent phosphorylation of L-homoserine to L-homoserine phosphate. The sequence is that of Homoserine kinase from Streptomyces avermitilis (strain ATCC 31267 / DSM 46492 / JCM 5070 / NBRC 14893 / NCIMB 12804 / NRRL 8165 / MA-4680).